Here is a 171-residue protein sequence, read N- to C-terminus: ATP synthase subunit delta (171 aa).

It belongs to the ATPase delta chain family. F-type ATPases have 2 components, F(1) - the catalytic core - and F(0) - the membrane proton channel. F(1) has five subunits: alpha(3), beta(3), gamma(1), delta(1), epsilon(1). F(0) has three main subunits: a(1), b(2) and c(10-14). The alpha and beta chains form an alternating ring which encloses part of the gamma chain. F(1) is attached to F(0) by a central stalk formed by the gamma and epsilon chains, while a peripheral stalk is formed by the delta and b chains.

Its subcellular location is the cell membrane. Functionally, f(1)F(0) ATP synthase produces ATP from ADP in the presence of a proton or sodium gradient. F-type ATPases consist of two structural domains, F(1) containing the extramembraneous catalytic core and F(0) containing the membrane proton channel, linked together by a central stalk and a peripheral stalk. During catalysis, ATP synthesis in the catalytic domain of F(1) is coupled via a rotary mechanism of the central stalk subunits to proton translocation. In terms of biological role, this protein is part of the stalk that links CF(0) to CF(1). It either transmits conformational changes from CF(0) to CF(1) or is implicated in proton conduction. The chain is ATP synthase subunit delta from Acholeplasma laidlawii (strain PG-8A).